The primary structure comprises 317 residues: Transmembrane and death domain protein 1 (317 aa).

Residues 1 to 27 (MAARTLASALVLTLWVWALAPAGAVDA) form the signal peptide. Residues 28–218 (MGPHAAVRLA…ERSPMGWAGP (191 aa)) are Extracellular-facing. A compositionally biased stretch (basic and acidic residues) spans 62–73 (ELSRLSEDRLAR). The segment at 62–106 (ELSRLSEDRLARPEPLNTTSGSPSRRRRREAAEDPAGRVAGPGEV) is disordered. A Death domain is found at 66-150 (LSEDRLARPE…DVARELGKNL (85 aa)). Asn78 carries N-linked (GlcNAc...) asparagine glycosylation. Residues 219–239 (LALGLLTGFVGALGTGALVVL) traverse the membrane as a helical segment. The Cytoplasmic portion of the chain corresponds to 240–317 (LTLWITGGDG…SWGSGALDGL (78 aa)).

The protein resides in the membrane. In Homo sapiens (Human), this protein is Transmembrane and death domain protein 1.